Consider the following 192-residue polypeptide: Cytidylate kinase (192 aa).

12–20 contributes to the ATP binding site; that stretch reads GLAGSGTTT.

The protein belongs to the cytidylate kinase family. Type 2 subfamily.

It localises to the cytoplasm. It carries out the reaction CMP + ATP = CDP + ADP. The enzyme catalyses dCMP + ATP = dCDP + ADP. The protein is Cytidylate kinase (cmk) of Pyrococcus horikoshii (strain ATCC 700860 / DSM 12428 / JCM 9974 / NBRC 100139 / OT-3).